The primary structure comprises 257 residues: Imidazole glycerol phosphate synthase subunit hisF1 (257 aa).

Active-site residues include Asp-11 and Asp-130.

The protein belongs to the HisA/HisF family. In terms of assembly, heterodimer of HisH and HisF.

The protein resides in the cytoplasm. The catalysed reaction is 5-[(5-phospho-1-deoxy-D-ribulos-1-ylimino)methylamino]-1-(5-phospho-beta-D-ribosyl)imidazole-4-carboxamide + L-glutamine = D-erythro-1-(imidazol-4-yl)glycerol 3-phosphate + 5-amino-1-(5-phospho-beta-D-ribosyl)imidazole-4-carboxamide + L-glutamate + H(+). It participates in amino-acid biosynthesis; L-histidine biosynthesis; L-histidine from 5-phospho-alpha-D-ribose 1-diphosphate: step 5/9. In terms of biological role, IGPS catalyzes the conversion of PRFAR and glutamine to IGP, AICAR and glutamate. The HisF subunit catalyzes the cyclization activity that produces IGP and AICAR from PRFAR using the ammonia provided by the HisH subunit. In Vibrio vulnificus (strain YJ016), this protein is Imidazole glycerol phosphate synthase subunit hisF1 (hisF1).